We begin with the raw amino-acid sequence, 700 residues long: DNA ligase (700 aa).

NAD(+) contacts are provided by residues 42 to 46, 91 to 92, and E126; these read DDEYD and SL. K128 acts as the N6-AMP-lysine intermediate in catalysis. Positions 149, 184, 300, and 324 each coordinate NAD(+). The Zn(2+) site is built by C418, C421, C436, and C441. Positions 598 to 686 constitute a BRCT domain; that stretch reads TRTDQLSGLN…GLGERGVAED (89 aa).

It belongs to the NAD-dependent DNA ligase family. LigA subfamily. Mn(2+) serves as cofactor.

It carries out the reaction NAD(+) + (deoxyribonucleotide)n-3'-hydroxyl + 5'-phospho-(deoxyribonucleotide)m = (deoxyribonucleotide)n+m + AMP + beta-nicotinamide D-nucleotide.. In terms of biological role, DNA ligase that catalyzes the formation of phosphodiester linkages between 5'-phosphoryl and 3'-hydroxyl groups in double-stranded DNA using NAD as a coenzyme and as the energy source for the reaction. It is essential for DNA replication and repair of damaged DNA. This Deinococcus radiodurans (strain ATCC 13939 / DSM 20539 / JCM 16871 / CCUG 27074 / LMG 4051 / NBRC 15346 / NCIMB 9279 / VKM B-1422 / R1) protein is DNA ligase.